The chain runs to 358 residues: Uroporphyrinogen decarboxylase (358 aa).

Residues 36–40 (RQAGR), Asp-85, Tyr-160, Ser-215, and His-338 each bind substrate.

The protein belongs to the uroporphyrinogen decarboxylase family. Homodimer.

Its subcellular location is the cytoplasm. The enzyme catalyses uroporphyrinogen III + 4 H(+) = coproporphyrinogen III + 4 CO2. The protein operates within porphyrin-containing compound metabolism; protoporphyrin-IX biosynthesis; coproporphyrinogen-III from 5-aminolevulinate: step 4/4. Functionally, catalyzes the decarboxylation of four acetate groups of uroporphyrinogen-III to yield coproporphyrinogen-III. The sequence is that of Uroporphyrinogen decarboxylase from Corynebacterium glutamicum (strain R).